The chain runs to 329 residues: Porphobilinogen deaminase (329 aa).

Cys250 carries the post-translational modification S-(dipyrrolylmethanemethyl)cysteine.

The protein belongs to the HMBS family. As to quaternary structure, monomer. Dipyrromethane serves as cofactor.

It catalyses the reaction 4 porphobilinogen + H2O = hydroxymethylbilane + 4 NH4(+). It functions in the pathway porphyrin-containing compound metabolism; protoporphyrin-IX biosynthesis; coproporphyrinogen-III from 5-aminolevulinate: step 2/4. Its function is as follows. Tetrapolymerization of the monopyrrole PBG into the hydroxymethylbilane pre-uroporphyrinogen in several discrete steps. The polypeptide is Porphobilinogen deaminase (Burkholderia pseudomallei (strain 668)).